Reading from the N-terminus, the 785-residue chain is E3 UFM1-protein ligase 1 homolog (785 aa).

Positions alanine 405–valine 483 are disordered.

It belongs to the UFL1 family.

In terms of biological role, E3 UFM1-protein ligase that mediates ufmylation of target proteins. The sequence is that of E3 UFM1-protein ligase 1 homolog from Drosophila pseudoobscura pseudoobscura (Fruit fly).